A 297-amino-acid polypeptide reads, in one-letter code: Esterase LipU (297 aa).

Catalysis depends on residues serine 140, glutamate 239, and histidine 269.

This sequence belongs to the 'GDXG' lipolytic enzyme family.

It is found in the secreted. The catalysed reaction is a fatty acid ester + H2O = an aliphatic alcohol + a fatty acid + H(+). It catalyses the reaction a butanoate ester + H2O = an aliphatic alcohol + butanoate + H(+). It carries out the reaction an acetyl ester + H2O = an aliphatic alcohol + acetate + H(+). The enzyme catalyses decanoate ester + H2O = decanoate + an aliphatic alcohol + H(+). The catalysed reaction is an octanoate ester + H2O = an aliphatic alcohol + octanoate + H(+). It catalyses the reaction a dodecanoate ester + H2O = an aliphatic alcohol + dodecanoate + H(+). It carries out the reaction hexadecanoate ester + H2O = an aliphatic alcohol + hexadecanoate + H(+). With respect to regulation, inhibited by the ionic detergent SDS and by the serine protease inhibitor PMSF. Inhibited by the FDA approved drugs Diosmin, Acarbose and Ouabain. These drugs remain bound in the active site pocket and could be probable drug candidates to combat TB disease. Its function is as follows. Esterase that shows preference for short chain fatty acids. Contributes to the growth of M.tuberculosis during the nutritive stress. Elicits strong humoral response in both extrapulmonary and relapsed cases of tuberculosis patients. This Mycobacterium tuberculosis (strain ATCC 25618 / H37Rv) protein is Esterase LipU.